Consider the following 347-residue polypeptide: MTTTRVCIDSSVALKIVRHCQESAPSIVAGQLLGLDVDGELRISHAFAFPQNAAGGNPNSDDGLSLRLKAVAKYQPEMIDHLKEVNVDSNSVGWYQSTVLGRIYNASVIENLAVFQEKNPDSVVLVYDVAGSEVVSDTDPSSTGPQGHTTTTPSGFNLRAFRLSEEYLNVRKSGKFDTATLTENNLTYHDVLVELPVEIKNSNLATLLLYQLGQQYPNSPFAESSFSNLNVSVDPFLEKNIEAIFDSVDDFHYDQGNYNYYQRQMTREQAKITQWQQKRKAENAAREKDGRPALPTDEWKRLFKLPTEPSRQDNLLISAQLNEHCSVIEEFGAAVNSKLFATQGGLL.

The region spanning 6-149 is the MPN domain; sequence VCIDSSVALK…PSSTGPQGHT (144 aa). A disordered region spans residues 136–155; sequence SDTDPSSTGPQGHTTTTPSG. Residues 138-155 are compositionally biased toward polar residues; the sequence is TDPSSTGPQGHTTTTPSG.

It belongs to the eIF-3 subunit H family. As to quaternary structure, component of the eukaryotic translation initiation factor 3 (eIF-3) complex.

Its subcellular location is the cytoplasm. Component of the eukaryotic translation initiation factor 3 (eIF-3) complex, which is involved in protein synthesis of a specialized repertoire of mRNAs and, together with other initiation factors, stimulates binding of mRNA and methionyl-tRNAi to the 40S ribosome. The eIF-3 complex specifically targets and initiates translation of a subset of mRNAs involved in cell proliferation. The sequence is that of Eukaryotic translation initiation factor 3 subunit H from Yarrowia lipolytica (strain CLIB 122 / E 150) (Yeast).